The following is a 156-amino-acid chain: Ribosome maturation factor RimP (156 aa).

Belongs to the RimP family.

The protein localises to the cytoplasm. In terms of biological role, required for maturation of 30S ribosomal subunits. The polypeptide is Ribosome maturation factor RimP (Bacillus cereus (strain B4264)).